We begin with the raw amino-acid sequence, 68 residues long: ATP synthase F(0) complex subunit 8 (68 aa).

Residues 8–24 (TWFTIIMAMLPTLYLIT) traverse the membrane as a helical segment. At K54 the chain carries N6-acetyllysine; alternate. K54 is subject to N6-succinyllysine; alternate. K57 is subject to N6-acetyllysine.

The protein belongs to the ATPase protein 8 family. Component of the ATP synthase complex composed at least of ATP5F1A/subunit alpha, ATP5F1B/subunit beta, ATP5MC1/subunit c (homooctomer), MT-ATP6/subunit a, MT-ATP8/subunit 8, ATP5ME/subunit e, ATP5MF/subunit f, ATP5MG/subunit g, ATP5MK/subunit k, ATP5MJ/subunit j, ATP5F1C/subunit gamma, ATP5F1D/subunit delta, ATP5F1E/subunit epsilon, ATP5PF/subunit F6, ATP5PB/subunit b, ATP5PD/subunit d, ATP5PO/subunit OSCP. ATP synthase complex consists of a soluble F(1) head domain (subunits alpha(3) and beta(3)) - the catalytic core - and a membrane F(0) domain - the membrane proton channel (subunits c, a, 8, e, f, g, k and j). These two domains are linked by a central stalk (subunits gamma, delta, and epsilon) rotating inside the F1 region and a stationary peripheral stalk (subunits F6, b, d, and OSCP). Interacts with PRICKLE3.

It is found in the mitochondrion membrane. Subunit 8, of the mitochondrial membrane ATP synthase complex (F(1)F(0) ATP synthase or Complex V) that produces ATP from ADP in the presence of a proton gradient across the membrane which is generated by electron transport complexes of the respiratory chain. ATP synthase complex consist of a soluble F(1) head domain - the catalytic core - and a membrane F(1) domain - the membrane proton channel. These two domains are linked by a central stalk rotating inside the F(1) region and a stationary peripheral stalk. During catalysis, ATP synthesis in the catalytic domain of F(1) is coupled via a rotary mechanism of the central stalk subunits to proton translocation. In vivo, can only synthesize ATP although its ATP hydrolase activity can be activated artificially in vitro. Part of the complex F(0) domain. The sequence is that of ATP synthase F(0) complex subunit 8 from Papio hamadryas (Hamadryas baboon).